The sequence spans 561 residues: Asparagine synthetase [glutamine-hydrolyzing] (561 aa).

C2 (for GATase activity) is an active-site residue. In terms of domain architecture, Glutamine amidotransferase type-2 spans 2–191 (CGIWALFGSD…PGHYEVLDLK (190 aa)). L-glutamine contacts are provided by residues 49–53 (RLAVV), 75–77 (NGE), and D97. The Asparagine synthetase domain maps to 213–536 (HAACDTVGNL…PGRSSWLPHY (324 aa)). ATP-binding positions include L256, I288, and 363–364 (SG).

It carries out the reaction L-aspartate + L-glutamine + ATP + H2O = L-asparagine + L-glutamate + AMP + diphosphate + H(+). It participates in amino-acid biosynthesis; L-asparagine biosynthesis; L-asparagine from L-aspartate (L-Gln route): step 1/1. In Gallus gallus (Chicken), this protein is Asparagine synthetase [glutamine-hydrolyzing] (ASNS).